The following is a 193-amino-acid chain: HMG-Y-related protein A (193 aa).

One can recognise an H15 domain in the interval 11–81; that stretch reads PIPPYPEMIL…LKNNYFRAGA (71 aa). The tract at residues 75 to 193 is disordered; the sequence is NYFRAGAPDA…PAVPSETAAA (119 aa). The Nuclear localization signal 1 (NLS) signature appears at 86–92; sequence PKRGRGR. DNA-binding regions (a.T hook) lie at residues 87–98, 113–124, 138–149, and 173–184; these read KRGRGRPPKARD, GRGRGRPPKAKS, PKPRGRPPKKAK, and KRGRGRPPKVRP. A Nuclear localization signal 2 (NLS) motif is present at residues 145–149; that stretch reads PKKAK.

It belongs to the histone H1/H5 family. Post-translationally, phosphorylated by CDK, this phosphorylation prevents DNA-binding. Motility is increased when hypophosphorylated. Acetylated.

The protein resides in the nucleus. It localises to the nucleolus. Functionally, binds A/T-rich DNA (e.g. present in the storage gamma-zein gene promoter) with a highly dynamic distribution into the nucleus. Probably involved in endosperm development, during cells shift from a mitotic cycle to endoreduplication leading to massive synthesis of storage proteins (zeins) and starch. This chain is HMG-Y-related protein A, found in Zea mays (Maize).